We begin with the raw amino-acid sequence, 847 residues long: DNA gyrase subunit A (847 aa).

The 500-residue stretch at 34–533 folds into the Topo IIA-type catalytic domain; sequence LPDVRDGLKP…NYSDINTSDL (500 aa). Tyr-122 (O-(5'-phospho-DNA)-tyrosine intermediate) is an active-site residue. The GyrA-box motif lies at 560–566; it reads QKRGGKG.

Belongs to the type II topoisomerase GyrA/ParC subunit family. Heterotetramer, composed of two GyrA and two GyrB chains. In the heterotetramer, GyrA contains the active site tyrosine that forms a transient covalent intermediate with DNA, while GyrB binds cofactors and catalyzes ATP hydrolysis.

The protein resides in the cytoplasm. It carries out the reaction ATP-dependent breakage, passage and rejoining of double-stranded DNA.. A type II topoisomerase that negatively supercoils closed circular double-stranded (ds) DNA in an ATP-dependent manner to modulate DNA topology and maintain chromosomes in an underwound state. Negative supercoiling favors strand separation, and DNA replication, transcription, recombination and repair, all of which involve strand separation. Also able to catalyze the interconversion of other topological isomers of dsDNA rings, including catenanes and knotted rings. Type II topoisomerases break and join 2 DNA strands simultaneously in an ATP-dependent manner. This Buchnera aphidicola subsp. Baizongia pistaciae (strain Bp) protein is DNA gyrase subunit A.